Consider the following 193-residue polypeptide: Peptidyl-tRNA hydrolase (193 aa).

Residue Tyr16 coordinates tRNA. The active-site Proton acceptor is the His21. TRNA is bound by residues Tyr66, Asn68, and Asn114.

It belongs to the PTH family. In terms of assembly, monomer.

The protein resides in the cytoplasm. It carries out the reaction an N-acyl-L-alpha-aminoacyl-tRNA + H2O = an N-acyl-L-amino acid + a tRNA + H(+). Hydrolyzes ribosome-free peptidyl-tRNAs (with 1 or more amino acids incorporated), which drop off the ribosome during protein synthesis, or as a result of ribosome stalling. Functionally, catalyzes the release of premature peptidyl moieties from peptidyl-tRNA molecules trapped in stalled 50S ribosomal subunits, and thus maintains levels of free tRNAs and 50S ribosomes. The protein is Peptidyl-tRNA hydrolase of Geobacter sulfurreducens (strain ATCC 51573 / DSM 12127 / PCA).